We begin with the raw amino-acid sequence, 784 residues long: Spindle pole body component alp4 (784 aa).

This sequence belongs to the TUBGCP family. As to quaternary structure, part of the gamma-tubulin complex. Interacts with mcp6. Interacts with mto1. Interacts with mto2.

It localises to the cytoplasm. The protein resides in the cytoskeleton. It is found in the microtubule organizing center. Its subcellular location is the spindle pole body. Component of the gamma tubule complex that is required for the regulation of both interphase microtubules and mitotic bipolar spindles. The protein is Spindle pole body component alp4 (alp4) of Schizosaccharomyces pombe (strain 972 / ATCC 24843) (Fission yeast).